A 3390-amino-acid chain; its full sequence is Genome polyprotein (3390 aa).

Residues 1 to 15 (MNNQRKKTGKPSINM) are interaction with host EXOC1. At 1–100 (MNNQRKKTGK…MLSIINKRKK (100 aa)) the chain is on the cytoplasmic side. Positions 37–72 (LLNGQGPMKLVMAFIAFLRFLAIPPTAGVLARWGTF) are hydrophobic; homodimerization of capsid protein C. Positions 101–114 (TSLCLMMMLPATLA) are cleaved as a propeptide — ER anchor for the capsid protein C, removed in mature form by serine protease NS3. Residues 101-118 (TSLCLMMMLPATLAFHLT) traverse the membrane as a helical segment. Residues 119–243 (SRDGEPRMIV…VEKVETWALR (125 aa)) are Extracellular-facing. N-linked (GlcNAc...) asparagine; by host glycosylation occurs at asparagine 183. A helical transmembrane segment spans residues 244-264 (HPGFTILALFLAHYIGTSLTQ). Position 265 (lysine 265) is a topological domain, cytoplasmic. Residues 266–280 (VVIFILLMLVTPSMT) traverse the membrane as a helical segment. Residues 281 to 723 (MRCVGVGNRD…VHQIFGSAYT (443 aa)) lie on the Extracellular side of the membrane. 4 disulfides stabilise this stretch: cysteine 283–cysteine 310, cysteine 340–cysteine 401, cysteine 354–cysteine 385, and cysteine 372–cysteine 396. N-linked (GlcNAc...) asparagine; by host glycosylation occurs at asparagine 347. The segment at 378–391 (DRGWGNGCGLFGKG) is fusion peptide. N-linked (GlcNAc...) asparagine; by host glycosylation occurs at asparagine 433. 2 disulfide bridges follow: cysteine 463-cysteine 563 and cysteine 580-cysteine 611. The chain crosses the membrane as a helical span at residues 724 to 744 (ALFSGVSWIMKIGIGVLLTWI). The Cytoplasmic segment spans residues 745 to 750 (GLNSKN). A helical membrane pass occupies residues 751 to 771 (TSMSFSCIAIGIITLYLGVVV). Topologically, residues 772 to 1193 (QADMGCVINW…MIGSNASDRM (422 aa)) are extracellular. Cystine bridges form between cysteine 777–cysteine 788, cysteine 828–cysteine 916, cysteine 952–cysteine 996, cysteine 1053–cysteine 1102, cysteine 1064–cysteine 1086, and cysteine 1085–cysteine 1089. Asparagine 903 and asparagine 980 each carry an N-linked (GlcNAc...) asparagine; by host glycan. N-linked (GlcNAc...) asparagine; by host glycosylation is found at asparagine 1132 and asparagine 1188. A helical membrane pass occupies residues 1194 to 1218 (GMGVTYLALIATFKIQPFLALGFFL). Over 1219-1224 (RKLTSR) the chain is Cytoplasmic. The chain crosses the membrane as a helical span at residues 1225-1243 (ENLLLGVGLAMAATLRLPE). At 1244-1267 (DIEQMANGIALGLMALKLITQFET) the chain is on the lumenal side. A helical transmembrane segment spans residues 1268–1288 (YQLWTALVSLTCSNTIFTLTV). Alanine 1289 is a topological domain (cytoplasmic). Residues 1290–1308 (WRTATLILAGISLLPVCQS) traverse the membrane as a helical segment. Residues 1309–1315 (SSMRKTD) are Lumenal-facing. Residues 1316 to 1336 (WLPMTVAAMGVPPLPLFIFSL) traverse the membrane as a helical segment. Residues 1337–1344 (KDTLKRRS) lie on the Cytoplasmic side of the membrane. A helical transmembrane segment spans residues 1345 to 1365 (WPLNEGVMAVGLVSILASSLL). Residues 1366 to 1368 (RND) lie on the Lumenal side of the membrane. The chain crosses the membrane as a helical span at residues 1369 to 1389 (VPMAGPLVAGGLLIACYVITG). At 1390–1443 (TSADLTVEKAADVTWEEEAEQTGVSHNLMITVDDDGTMRIKDDETENILTVLLK) the chain is on the cytoplasmic side. An interacts with and activates NS3 protease region spans residues 1396–1435 (VEKAADVTWEEEAEQTGVSHNLMITVDDDGTMRIKDDETE). Positions 1444–1464 (TALLIVSGIFPCSIPATLLVW) form an intramembrane region, helical. The Cytoplasmic segment spans residues 1465–2146 (HTWQKQTQRS…VEELPETMET (682 aa)). The Peptidase S7 domain maps to 1474-1651 (SGVLWDVPSP…NAEPDGPTPE (178 aa)). Active-site charge relay system; for serine protease NS3 activity residues include histidine 1524, aspartate 1548, and serine 1608. The Helicase ATP-binding domain occupies 1654–1810 (EEMFKKRNLT…QSNAPIQDEE (157 aa)). The important for RNA-binding stretch occupies residues 1658–1661 (KKRN). 1667–1674 (LHPGSGKT) contacts ATP. The DEAH box signature appears at 1758 to 1761 (DEAH). Residues 1821-1986 (GNEWITDFVG…GIIPALFEPE (166 aa)) enclose the Helicase C-terminal domain. Residue lysine 1862 is modified to N6-acetyllysine; by host. A helical transmembrane segment spans residues 2147–2167 (LLLLGLMILLTGGAMLFLISG). At 2168–2169 (KG) the chain is on the lumenal side. Residues 2170–2190 (IGKTSIGLICVIASSGMLWMA) constitute an intramembrane region (helical). Aspartate 2191 is a topological domain (lumenal). The chain crosses the membrane as a helical span at residues 2192 to 2212 (VPLQWIASAIVLEFFMMVLLI). Topologically, residues 2213–2227 (PEPEKQRTPQDNQLA) are cytoplasmic. Residues 2228–2248 (YVVIGILTLAAIVAANEMGLL) form a helical membrane-spanning segment. At 2249 to 2273 (ETTKRDLGMSKEPGVVSPTSYLDVD) the chain is on the lumenal side. An intramembrane region (helical) is located at residues 2274 to 2294 (LHPASAWTLYAVATTVITPML). Residues 2295–2305 (RHTIENSTANV) lie on the Lumenal side of the membrane. Asparagine 2300 and asparagine 2304 each carry an N-linked (GlcNAc...) asparagine; by host glycan. The segment at residues 2306 to 2326 (SLAAIANQAVVLMGLDKGWPI) is an intramembrane region (helical). At 2327–2346 (SKMDLGVPLLALGCYSQVNP) the chain is on the lumenal side. The chain crosses the membrane as a helical span at residues 2347 to 2367 (LTLIAAVLLLVTHYAIIGPGL). Topologically, residues 2368 to 2412 (QAKATREAQKRTAAGIMKNPTVDGIMTIDLDPVIYDSKFEKQLGQ) are cytoplasmic. The chain crosses the membrane as a helical span at residues 2413 to 2433 (VMLLVLCAVQLLLMRTSWALC). Residues 2434–2458 (EVLTLATGPITTLWEGSPGKFWNTT) are Lumenal-facing. A glycan (N-linked (GlcNAc...) asparagine; by host) is linked at asparagine 2456. Residues 2459–2479 (IAVSMANIFRGSYLAGAGLAF) form a helical membrane-spanning segment. The Cytoplasmic portion of the chain corresponds to 2480–3390 (SIMKSVGTGK…KEEESEGAIW (911 aa)). Residues 2492 to 2753 (TGSQGETLGE…DVDLGAGTRH (262 aa)) form the mRNA cap 0-1 NS5-type MT domain. Serine 2546 contacts S-adenosyl-L-methionine. Serine 2546 carries the phosphoserine modification. Lysine 2551 serves as the catalytic For 2'-O-MTase activity. The short motif at 2567–2570 (VIDL) is the SUMO-interacting motif element. S-adenosyl-L-methionine is bound by residues glycine 2576, tryptophan 2577, threonine 2594, lysine 2595, aspartate 2621, and valine 2622. The active-site For 2'-O-MTase activity is aspartate 2636. S-adenosyl-L-methionine is bound at residue isoleucine 2637. Active-site for 2'-O-MTase activity residues include lysine 2670 and glutamate 2706. Tyrosine 2708 is an S-adenosyl-L-methionine binding site. 4 residues coordinate Zn(2+): glutamate 2927, histidine 2931, cysteine 2936, and cysteine 2939. Residues 3018–3168 (AMYADDTAGW…PIDDRFANAL (151 aa)) form the RdRp catalytic domain. Residues histidine 3202, cysteine 3218, and cysteine 3337 each coordinate Zn(2+).

This sequence in the N-terminal section; belongs to the class I-like SAM-binding methyltransferase superfamily. mRNA cap 0-1 NS5-type methyltransferase family. Homodimer. Interacts (via N-terminus) with host EXOC1 (via C-terminus); this interaction results in EXOC1 degradation through the proteasome degradation pathway. In terms of assembly, forms heterodimers with envelope protein E in the endoplasmic reticulum and Golgi. As to quaternary structure, homodimer; in the endoplasmic reticulum and Golgi. Interacts with protein prM. Interacts with non-structural protein 1. Homodimer; Homohexamer when secreted. Interacts with envelope protein E. In terms of assembly, interacts (via N-terminus) with serine protease NS3. As to quaternary structure, forms a heterodimer with serine protease NS3. May form homooligomers. Forms a heterodimer with NS2B. Interacts with NS4B. Interacts with unphosphorylated RNA-directed RNA polymerase NS5; this interaction stimulates RNA-directed RNA polymerase NS5 guanylyltransferase activity. In terms of assembly, interacts with host MAVS; this interaction inhibits the synthesis of IFN-beta. Interacts with host AUP1; the interaction occurs in the presence of Dengue virus NS4B and induces lipophagy which facilitates production of virus progeny particles. As to quaternary structure, interacts with serine protease NS3. Homodimer. Interacts with host STAT2; this interaction inhibits the phosphorylation of the latter, and, when all viral proteins are present (polyprotein), targets STAT2 for degradation. Interacts with serine protease NS3. In terms of processing, specific enzymatic cleavages in vivo yield mature proteins. Cleavages in the lumen of endoplasmic reticulum are performed by host signal peptidase, whereas cleavages in the cytoplasmic side are performed by serine protease NS3. Signal cleavage at the 2K-4B site requires a prior NS3 protease-mediated cleavage at the 4A-2K site. Cleaved in post-Golgi vesicles by a host furin, releasing the mature small envelope protein M, and peptide pr. This cleavage is incomplete as up to 30% of viral particles still carry uncleaved prM. Post-translationally, N-glycosylated. In terms of processing, N-glycosylated. The excreted form is glycosylated and this is required for efficient secretion of the protein from infected cells. Acetylated by host KAT5. Acetylation modulates NS3 RNA-binding and unwinding activities and plays an important positive role for viral replication. Post-translationally, sumoylation of RNA-directed RNA polymerase NS5 increases NS5 protein stability allowing proper viral RNA replication. In terms of processing, phosphorylated on serines residues. This phosphorylation may trigger NS5 nuclear localization.

The protein localises to the virion. Its subcellular location is the host nucleus. It localises to the host cytoplasm. The protein resides in the host perinuclear region. It is found in the secreted. The protein localises to the virion membrane. Its subcellular location is the host endoplasmic reticulum membrane. It localises to the host mitochondrion. It carries out the reaction Selective hydrolysis of -Xaa-Xaa-|-Yaa- bonds in which each of the Xaa can be either Arg or Lys and Yaa can be either Ser or Ala.. The enzyme catalyses RNA(n) + a ribonucleoside 5'-triphosphate = RNA(n+1) + diphosphate. The catalysed reaction is a ribonucleoside 5'-triphosphate + H2O = a ribonucleoside 5'-diphosphate + phosphate + H(+). It catalyses the reaction ATP + H2O = ADP + phosphate + H(+). It carries out the reaction a 5'-end (5'-triphosphoguanosine)-ribonucleoside in mRNA + S-adenosyl-L-methionine = a 5'-end (N(7)-methyl 5'-triphosphoguanosine)-ribonucleoside in mRNA + S-adenosyl-L-homocysteine. The enzyme catalyses a 5'-end (N(7)-methyl 5'-triphosphoguanosine)-ribonucleoside in mRNA + S-adenosyl-L-methionine = a 5'-end (N(7)-methyl 5'-triphosphoguanosine)-(2'-O-methyl-ribonucleoside) in mRNA + S-adenosyl-L-homocysteine + H(+). Functionally, plays a role in virus budding by binding to the cell membrane and gathering the viral RNA into a nucleocapsid that forms the core of a mature virus particle. During virus entry, may induce genome penetration into the host cytoplasm after hemifusion induced by the surface proteins. Can migrate to the cell nucleus where it modulates host functions. Overcomes the anti-viral effects of host EXOC1 by sequestering and degrading the latter through the proteasome degradation pathway. Inhibits RNA silencing by interfering with host Dicer. In terms of biological role, prevents premature fusion activity of envelope proteins in trans-Golgi by binding to envelope protein E at pH6.0. After virion release in extracellular space, gets dissociated from E dimers. Its function is as follows. Acts as a chaperone for envelope protein E during intracellular virion assembly by masking and inactivating envelope protein E fusion peptide. prM is the only viral peptide matured by host furin in the trans-Golgi network probably to avoid catastrophic activation of the viral fusion activity in acidic Golgi compartment prior to virion release. prM-E cleavage is inefficient, and many virions are only partially matured. These uncleaved prM would play a role in immune evasion. Functionally, may play a role in virus budding. Exerts cytotoxic effects by activating a mitochondrial apoptotic pathway through M ectodomain. May display a viroporin activity. Binds to host cell surface receptor and mediates fusion between viral and cellular membranes. Envelope protein is synthesized in the endoplasmic reticulum in the form of heterodimer with protein prM. They play a role in virion budding in the ER, and the newly formed immature particle is covered with 60 spikes composed of heterodimer between precursor prM and envelope protein E. The virion is transported to the Golgi apparatus where the low pH causes dissociation of PrM-E heterodimers and formation of E homodimers. prM-E cleavage is inefficient, and many virions are only partially matured. These uncleaved prM would play a role in immune evasion. In terms of biological role, involved in immune evasion, pathogenesis and viral replication. Once cleaved off the polyprotein, is targeted to three destinations: the viral replication cycle, the plasma membrane and the extracellular compartment. Essential for viral replication. Required for formation of the replication complex and recruitment of other non-structural proteins to the ER-derived membrane structures. Excreted as a hexameric lipoparticle that plays a role against host immune response. Antagonizing the complement function. Binds to the host macrophages and dendritic cells. Inhibits signal transduction originating from Toll-like receptor 3 (TLR3). Its function is as follows. Disrupts the host endothelial glycocalyx layer of host pulmonary microvascular endothelial cells, inducing degradation of sialic acid and shedding of heparan sulfate proteoglycans. NS1 induces expression of sialidases, heparanase, and activates cathepsin L, which activates heparanase via enzymatic cleavage. These effects are probably linked to the endothelial hyperpermeability observed in severe dengue disease. Functionally, component of the viral RNA replication complex that functions in virion assembly and antagonizes the host immune response. Required cofactor for the serine protease function of NS3. May have membrane-destabilizing activity and form viroporins. In terms of biological role, displays three enzymatic activities: serine protease, NTPase and RNA helicase. NS3 serine protease, in association with NS2B, performs its autocleavage and cleaves the polyprotein at dibasic sites in the cytoplasm: C-prM, NS2A-NS2B, NS2B-NS3, NS3-NS4A, NS4A-2K and NS4B-NS5. NS3 RNA helicase binds RNA and unwinds dsRNA in the 3' to 5' direction. Its function is as follows. Regulates the ATPase activity of the NS3 helicase activity. NS4A allows NS3 helicase to conserve energy during unwinding. Plays a role in the inhibition of the host innate immune response. Interacts with host MAVS and thereby prevents the interaction between RIGI and MAVS. In turn, IFN-beta production is impaired. Interacts with host AUP1 which mediates induction of lipophagy in host cells and facilitates production of virus progeny particles. Functionally, functions as a signal peptide for NS4B and is required for the interferon antagonism activity of the latter. Induces the formation of ER-derived membrane vesicles where the viral replication takes place. Inhibits interferon (IFN)-induced host STAT1 phosphorylation and nuclear translocation, thereby preventing the establishment of cellular antiviral state by blocking the IFN-alpha/beta pathway. In terms of biological role, replicates the viral (+) and (-) RNA genome, and performs the capping of genomes in the cytoplasm. NS5 methylates viral RNA cap at guanine N-7 and ribose 2'-O positions. Besides its role in RNA genome replication, also prevents the establishment of cellular antiviral state by blocking the interferon-alpha/beta (IFN-alpha/beta) signaling pathway. Inhibits host TYK2 and STAT2 phosphorylation, thereby preventing activation of JAK-STAT signaling pathway. The polypeptide is Genome polyprotein (Dengue virus type 3 (strain China/80-2/1980) (DENV-3)).